A 318-amino-acid chain; its full sequence is tRNA uridine(34) hydroxylase (318 aa).

Positions 123–217 constitute a Rhodanese domain; the sequence is EDDDTVIIDA…YGKDPETKGQ (95 aa). C177 serves as the catalytic Cysteine persulfide intermediate.

It belongs to the TrhO family.

It carries out the reaction uridine(34) in tRNA + AH2 + O2 = 5-hydroxyuridine(34) in tRNA + A + H2O. Functionally, catalyzes oxygen-dependent 5-hydroxyuridine (ho5U) modification at position 34 in tRNAs. This chain is tRNA uridine(34) hydroxylase, found in Staphylococcus aureus (strain MRSA252).